The chain runs to 186 residues: ATP synthase subunit delta (186 aa).

It belongs to the ATPase delta chain family. F-type ATPases have 2 components, F(1) - the catalytic core - and F(0) - the membrane proton channel. F(1) has five subunits: alpha(3), beta(3), gamma(1), delta(1), epsilon(1). F(0) has three main subunits: a(1), b(2) and c(10-14). The alpha and beta chains form an alternating ring which encloses part of the gamma chain. F(1) is attached to F(0) by a central stalk formed by the gamma and epsilon chains, while a peripheral stalk is formed by the delta and b chains.

The protein resides in the cell inner membrane. F(1)F(0) ATP synthase produces ATP from ADP in the presence of a proton or sodium gradient. F-type ATPases consist of two structural domains, F(1) containing the extramembraneous catalytic core and F(0) containing the membrane proton channel, linked together by a central stalk and a peripheral stalk. During catalysis, ATP synthesis in the catalytic domain of F(1) is coupled via a rotary mechanism of the central stalk subunits to proton translocation. Functionally, this protein is part of the stalk that links CF(0) to CF(1). It either transmits conformational changes from CF(0) to CF(1) or is implicated in proton conduction. The protein is ATP synthase subunit delta of Nitrobacter hamburgensis (strain DSM 10229 / NCIMB 13809 / X14).